Here is a 180-residue protein sequence, read N- to C-terminus: UPF0149 protein XOO1028 (180 aa).

The protein belongs to the UPF0149 family.

The sequence is that of UPF0149 protein XOO1028 from Xanthomonas oryzae pv. oryzae (strain MAFF 311018).